A 261-amino-acid polypeptide reads, in one-letter code: Cytochrome c oxidase subunit 3 (261 aa).

The Mitochondrial matrix portion of the chain corresponds to 1–15 (MTHQTHAYHMVNPSP). Residues 16–34 (WPLTGALSALLMTSGLIMW) traverse the membrane as a helical segment. Topologically, residues 35–40 (FHFNSM) are mitochondrial intermembrane. Residues 41-66 (YLLMLGLTTNTLTMYQWWRDIVREST) form a helical membrane-spanning segment. The Mitochondrial matrix portion of the chain corresponds to 67-72 (FQGHHT). A helical transmembrane segment spans residues 73 to 105 (PIVQKGLRYGMILFIVSEVFFFAGFFWAFYHSS). Over 106-128 (LAPTPELGGCWPPTGITPLNPME) the chain is Mitochondrial intermembrane. A helical membrane pass occupies residues 129–152 (VPLLNTSVLLASGVSITWAHHSLM). The Mitochondrial matrix portion of the chain corresponds to 153 to 155 (EGN). A helical membrane pass occupies residues 156–183 (RKHMLQALFITISLGVYFTLLQASEYYE). The Mitochondrial intermembrane segment spans residues 184 to 190 (TPFTISD). Residues 191–223 (GIYGSTFFMATGFHGLHVIIGSTFLIVCFMRQL) traverse the membrane as a helical segment. The Mitochondrial matrix segment spans residues 224–232 (KFHFTSNHH). The helical transmembrane segment at 233 to 256 (FGFEAAAWYWHFVDVVWLFLYVSI) threads the bilayer. The Mitochondrial intermembrane segment spans residues 257 to 261 (YWWGS).

The protein belongs to the cytochrome c oxidase subunit 3 family. As to quaternary structure, component of the cytochrome c oxidase (complex IV, CIV), a multisubunit enzyme composed of 14 subunits. The complex is composed of a catalytic core of 3 subunits MT-CO1, MT-CO2 and MT-CO3, encoded in the mitochondrial DNA, and 11 supernumerary subunits COX4I, COX5A, COX5B, COX6A, COX6B, COX6C, COX7A, COX7B, COX7C, COX8 and NDUFA4, which are encoded in the nuclear genome. The complex exists as a monomer or a dimer and forms supercomplexes (SCs) in the inner mitochondrial membrane with NADH-ubiquinone oxidoreductase (complex I, CI) and ubiquinol-cytochrome c oxidoreductase (cytochrome b-c1 complex, complex III, CIII), resulting in different assemblies (supercomplex SCI(1)III(2)IV(1) and megacomplex MCI(2)III(2)IV(2)).

It localises to the mitochondrion inner membrane. The catalysed reaction is 4 Fe(II)-[cytochrome c] + O2 + 8 H(+)(in) = 4 Fe(III)-[cytochrome c] + 2 H2O + 4 H(+)(out). Functionally, component of the cytochrome c oxidase, the last enzyme in the mitochondrial electron transport chain which drives oxidative phosphorylation. The respiratory chain contains 3 multisubunit complexes succinate dehydrogenase (complex II, CII), ubiquinol-cytochrome c oxidoreductase (cytochrome b-c1 complex, complex III, CIII) and cytochrome c oxidase (complex IV, CIV), that cooperate to transfer electrons derived from NADH and succinate to molecular oxygen, creating an electrochemical gradient over the inner membrane that drives transmembrane transport and the ATP synthase. Cytochrome c oxidase is the component of the respiratory chain that catalyzes the reduction of oxygen to water. Electrons originating from reduced cytochrome c in the intermembrane space (IMS) are transferred via the dinuclear copper A center (CU(A)) of subunit 2 and heme A of subunit 1 to the active site in subunit 1, a binuclear center (BNC) formed by heme A3 and copper B (CU(B)). The BNC reduces molecular oxygen to 2 water molecules using 4 electrons from cytochrome c in the IMS and 4 protons from the mitochondrial matrix. The sequence is that of Cytochrome c oxidase subunit 3 (MT-CO3) from Halichoerus grypus (Gray seal).